Reading from the N-terminus, the 339-residue chain is Ketol-acid reductoisomerase (NADP(+)) (339 aa).

A KARI N-terminal Rossmann domain is found at 1-182 (MRVYYDRDAD…GGGRAGIIET (182 aa)). NADP(+) is bound by residues 24-27 (YGSQ), arginine 48, serine 51, serine 53, and 83-86 (DELQ). The active site involves histidine 108. Residue glycine 134 participates in NADP(+) binding. Residues 183 to 328 (TFKEECETDL…ERLRGMMPWI (146 aa)) form the KARI C-terminal knotted domain. Mg(2+)-binding residues include aspartate 191, glutamate 195, glutamate 227, and glutamate 231. Serine 252 provides a ligand contact to substrate.

This sequence belongs to the ketol-acid reductoisomerase family. Mg(2+) is required as a cofactor.

It catalyses the reaction (2R)-2,3-dihydroxy-3-methylbutanoate + NADP(+) = (2S)-2-acetolactate + NADPH + H(+). The catalysed reaction is (2R,3R)-2,3-dihydroxy-3-methylpentanoate + NADP(+) = (S)-2-ethyl-2-hydroxy-3-oxobutanoate + NADPH + H(+). Its pathway is amino-acid biosynthesis; L-isoleucine biosynthesis; L-isoleucine from 2-oxobutanoate: step 2/4. It participates in amino-acid biosynthesis; L-valine biosynthesis; L-valine from pyruvate: step 2/4. In terms of biological role, involved in the biosynthesis of branched-chain amino acids (BCAA). Catalyzes an alkyl-migration followed by a ketol-acid reduction of (S)-2-acetolactate (S2AL) to yield (R)-2,3-dihydroxy-isovalerate. In the isomerase reaction, S2AL is rearranged via a Mg-dependent methyl migration to produce 3-hydroxy-3-methyl-2-ketobutyrate (HMKB). In the reductase reaction, this 2-ketoacid undergoes a metal-dependent reduction by NADPH to yield (R)-2,3-dihydroxy-isovalerate. In Methylobacterium sp. (strain 4-46), this protein is Ketol-acid reductoisomerase (NADP(+)).